A 476-amino-acid chain; its full sequence is Aspartyl/glutamyl-tRNA(Asn/Gln) amidotransferase subunit B (476 aa).

It belongs to the GatB/GatE family. GatB subfamily. In terms of assembly, heterotrimer of A, B and C subunits.

The enzyme catalyses L-glutamyl-tRNA(Gln) + L-glutamine + ATP + H2O = L-glutaminyl-tRNA(Gln) + L-glutamate + ADP + phosphate + H(+). It catalyses the reaction L-aspartyl-tRNA(Asn) + L-glutamine + ATP + H2O = L-asparaginyl-tRNA(Asn) + L-glutamate + ADP + phosphate + 2 H(+). Functionally, allows the formation of correctly charged Asn-tRNA(Asn) or Gln-tRNA(Gln) through the transamidation of misacylated Asp-tRNA(Asn) or Glu-tRNA(Gln) in organisms which lack either or both of asparaginyl-tRNA or glutaminyl-tRNA synthetases. The reaction takes place in the presence of glutamine and ATP through an activated phospho-Asp-tRNA(Asn) or phospho-Glu-tRNA(Gln). This Bacillus pumilus (strain SAFR-032) protein is Aspartyl/glutamyl-tRNA(Asn/Gln) amidotransferase subunit B.